A 447-amino-acid polypeptide reads, in one-letter code: Polyamine export protein (447 aa).

Residues 1 to 4 (MLNS) are Cytoplasmic-facing. The 197-residue stretch at 1-197 (MLNSILVILC…ALAGVLRKQE (197 aa)) folds into the CNNM transmembrane domain. Residues 5 to 25 (ILVILCLIAVSAFFSMSEISL) form a helical membrane-spanning segment. Residues 26-54 (AASRKIKLKLLADEGNINAQRVLNMQENP) lie on the Periplasmic side of the membrane. A helical transmembrane segment spans residues 55–75 (GMFFTVVQIGLNAVAILGGIV). Topologically, residues 76 to 99 (GDAAFSPAFHSLFSRYMSAELSEQ) are cytoplasmic. Residues 100–120 (LSFILSFSLVTGMFILFADLT) form a helical membrane-spanning segment. Residues 121-141 (PKRIGMIAPEAVALRIINPMR) lie on the Periplasmic side of the membrane. The helical transmembrane segment at 142 to 162 (FCLYVCTPLVWFFNGLANIIF) threads the bilayer. Residues 163–447 (RIFKLPMVRK…DAKDKEESVA (285 aa)) are Cytoplasmic-facing. 2 CBS domains span residues 216 to 275 (MTPR…NQSL) and 282 to 343 (QIRN…GLEE).

The protein belongs to the UPF0053 family. PaeA subfamily.

The protein resides in the cell inner membrane. Functionally, involved in cadaverine and putrescine tolerance in stationary phase. May facilitate the efflux of both cadaverine and putrescine from the cytoplasm, reducing potentially toxic levels under certain stress conditions. The protein is Polyamine export protein of Escherichia coli O157:H7.